The following is a 200-amino-acid chain: MRRNALELEVFAGQEKSELSMIEVARAILELRGRDHEMHFSDLVNEIQNYLGTSNSDIREALPLFYTELNFDGSFISLGDNKWGLRSWYGVDEIDEEIIALEENDDDEVAPKAKKKRVNAFMDGDSDAIDYNADDPEDEDAYEADPALSYDDENPDDEKNEVEAYDAEINEIAPDDLGEDVDLNEDDDEFSDDDAETSEE.

The HTH HARE-type domain maps to L19–W88. Composition is skewed to acidic residues over residues D125–E143 and Y150–E200. Residues D125–E200 are disordered.

This sequence belongs to the RpoE family. In terms of assembly, RNAP is composed of a core of 2 alpha, a beta and a beta' subunits. The core is associated with a delta subunit and one of several sigma factors.

Its function is as follows. Participates in both the initiation and recycling phases of transcription. In the presence of the delta subunit, RNAP displays an increased specificity of transcription, a decreased affinity for nucleic acids, and an increased efficiency of RNA synthesis because of enhanced recycling. The sequence is that of Probable DNA-directed RNA polymerase subunit delta from Streptococcus pneumoniae serotype 4 (strain ATCC BAA-334 / TIGR4).